The following is a 410-amino-acid chain: Polyprenol-phosphate-mannose-dependent alpha-(1-2)-phosphatidylinositol pentamannoside mannosyltransferase (410 aa).

The next 10 membrane-spanning stretches (helical) occupy residues leucine 31–proline 51, phenylalanine 96–tryptophan 116, threonine 160–threonine 180, leucine 188–leucine 208, alanine 214–valine 234, glycine 276–tryptophan 296, leucine 306–histidine 326, tryptophan 328–glycine 348, isoleucine 351–alanine 371, and leucine 384–phenylalanine 404.

This sequence belongs to the glycosyltransferase 87 family.

Its subcellular location is the cell membrane. It participates in phospholipid metabolism; phosphatidylinositol metabolism. In terms of biological role, catalyzes the alpha-1,2 addition of a mannose residue from polyprenol-phosphate-mannose (PPM) to a monoacyl phosphatidylinositol tetramannoside (AcPIM4) to generate a monoacyl phosphatidylinositol pentamannoside (AcPIM5). The sequence is that of Polyprenol-phosphate-mannose-dependent alpha-(1-2)-phosphatidylinositol pentamannoside mannosyltransferase from Mycolicibacterium smegmatis (strain ATCC 700084 / mc(2)155) (Mycobacterium smegmatis).